The following is a 285-amino-acid chain: Sulfotransferase 2A6 (285 aa).

44 to 49 (KSGTNW) is a binding site for 3'-phosphoadenylyl sulfate. His-99 functions as the Proton acceptor in the catalytic mechanism. Residues Arg-121, Ser-129, Tyr-184, 218-223 (SSFQAM), and 247-249 (RKG) contribute to the 3'-phosphoadenylyl sulfate site.

It belongs to the sulfotransferase 1 family. In terms of assembly, oligomer.

It is found in the cytoplasm. The protein localises to the cytosol. It carries out the reaction an alcohol + 3'-phosphoadenylyl sulfate = an alkyl sulfate + adenosine 3',5'-bisphosphate + H(+). It catalyses the reaction glycolithocholate + 3'-phosphoadenylyl sulfate = sulfoglycolithocholate + adenosine 3',5'-bisphosphate + H(+). The catalysed reaction is taurolithocholate + 3'-phosphoadenylyl sulfate = taurolithocholate 3-sulfate + adenosine 3',5'-bisphosphate + H(+). The enzyme catalyses 3beta-hydroxyandrost-5-en-17-one + 3'-phosphoadenylyl sulfate = dehydroepiandrosterone 3-sulfate + adenosine 3',5'-bisphosphate + H(+). In terms of biological role, sulfotransferase that utilizes 3'-phospho-5'-adenylyl sulfate (PAPS) as sulfonate donor to catalyze the sulfonation of the hydroxyl group of hydroxysteroids and bile acids. This chain is Sulfotransferase 2A6, found in Mus musculus (Mouse).